The chain runs to 432 residues: Enolase (432 aa).

Q167 serves as a coordination point for (2R)-2-phosphoglycerate. E209 serves as the catalytic Proton donor. D246, E287, and D314 together coordinate Mg(2+). (2R)-2-phosphoglycerate contacts are provided by K339, R368, S369, and K390. K339 acts as the Proton acceptor in catalysis.

The protein belongs to the enolase family. It depends on Mg(2+) as a cofactor.

It localises to the cytoplasm. Its subcellular location is the secreted. The protein localises to the cell surface. It carries out the reaction (2R)-2-phosphoglycerate = phosphoenolpyruvate + H2O. It participates in carbohydrate degradation; glycolysis; pyruvate from D-glyceraldehyde 3-phosphate: step 4/5. Catalyzes the reversible conversion of 2-phosphoglycerate (2-PG) into phosphoenolpyruvate (PEP). It is essential for the degradation of carbohydrates via glycolysis. The polypeptide is Enolase (Prochlorococcus marinus (strain SARG / CCMP1375 / SS120)).